A 396-amino-acid chain; its full sequence is Elongation factor Tu (396 aa).

In terms of domain architecture, tr-type G spans 10–205 (KSHANIGTIG…AVDEYIPTPE (196 aa)). Residues 19–26 (GHVDHGKT) are G1. 19 to 26 (GHVDHGKT) is a binding site for GTP. Position 26 (Thr-26) interacts with Mg(2+). Positions 61-65 (GITIS) are G2. A G3 region spans residues 82-85 (DCPG). GTP-binding positions include 82–86 (DCPGH) and 137–140 (NKCD). A G4 region spans residues 137–140 (NKCD). The segment at 175–177 (SAL) is G5.

This sequence belongs to the TRAFAC class translation factor GTPase superfamily. Classic translation factor GTPase family. EF-Tu/EF-1A subfamily. Monomer.

Its subcellular location is the cytoplasm. The catalysed reaction is GTP + H2O = GDP + phosphate + H(+). In terms of biological role, GTP hydrolase that promotes the GTP-dependent binding of aminoacyl-tRNA to the A-site of ribosomes during protein biosynthesis. The sequence is that of Elongation factor Tu from Bacillus velezensis (strain DSM 23117 / BGSC 10A6 / LMG 26770 / FZB42) (Bacillus amyloliquefaciens subsp. plantarum).